The following is a 134-amino-acid chain: Small ribosomal subunit protein uS8c (134 aa).

Belongs to the universal ribosomal protein uS8 family. In terms of assembly, part of the 30S ribosomal subunit.

The protein localises to the plastid. It localises to the chloroplast. One of the primary rRNA binding proteins, it binds directly to 16S rRNA central domain where it helps coordinate assembly of the platform of the 30S subunit. The protein is Small ribosomal subunit protein uS8c (rps8) of Aethionema cordifolium (Lebanon stonecress).